Reading from the N-terminus, the 263-residue chain is uncharacterized protein (263 aa).

A run of 7 helical transmembrane segments spans residues 1–21, 38–58, 82–102, 118–138, 151–171, 196–216, and 230–250; these read MLVIVLQGLAGFLSIIAILCQ, LFLLDFVGNGLYLYCALHYCY, IPISSFLILKDFCVSCCCMMV, GISITSIIIISVFLVLGIFTY, GKFGVFYLEHINYLWVMANLL, FALISFLAESIDLLGRLVIPT, and FWVKLIQFVTLLVILCQVQYV.

The protein localises to the membrane. This is an uncharacterized protein from Saccharomyces cerevisiae (strain ATCC 204508 / S288c) (Baker's yeast).